The primary structure comprises 735 residues: MAKERGLISPSDFAQLQKYMEYSTKKVSDVLKLFEDGEMAKYVQGDAIGYEGFQQFLKIYLEVDNVPRHLSLALFQSFETGHCLNETNVTKDVVCLNDVSCYFSLLEGGRPEDKLEFTFKLYDTDRNGILDSSEVDKIILQMMRVAEYLDWDVSELRPILQEMMKEIDYDGSGSVSQAEWVRAGATTVPLLVLLGLEMTLKDDGQHMWRPKRFPRPVYCNLCESSIGLGKQGLSCNLCKYTVHDQCAMKALPCEVSTYAKSRKDIGVQSHVWVRGGCESGRCDRCQKKIRIYHSLTGLHCVWCHLEIHDDCLQAVGHECDCGLLRDHILPPSSIYPSVLASGPDRKNSKTSQKTMDDLNLSTSEALRIDPVPNTHPLLVFVNPKSGGKQGQRVLWKFQYILNPRQVFNLLKDGPEIGLRLFKDVPDSRILVCGGDGTVGWILETIDKANLPVLPPVAVLPLGTGNDLARCLRWGGGYEGQNLAKILKDLEMSKVVHMDRWSVEVIPQQTEEKSDPVPFQIINNYFSIGVDASIAHRFHIMREKYPEKFNSRMKNKLWYFEFATSESIFSTCKKLEESLTVEICGKPLDLSNLSLEGIAVLNIPSMHGGSNLWGDTRRPHGDIYGINQALGATAKVITDPDILKTCVPDLSDKRLEVVGLEGAIEMGQIYTKLKNAGRRLAKCSEITFHTTKTLPMQIDGEPWMQTPCTIKITHKNQMPMLMGPPPRSTNFFGFLS.

2 consecutive EF-hand domains span residues 110–145 (RPED…MMRV) and 155–190 (ELRP…TVPL). 9 residues coordinate Ca(2+): D123, D125, N127, E134, D168, D170, S172, S174, and E179. Phorbol-ester/DAG-type zinc fingers lie at residues 205–253 (QHMW…ALPC) and 269–319 (SHVW…GHEC). A DAGKc domain is found at 372 to 506 (PNTHPLLVFV…MDRWSVEVIP (135 aa)). N6-acetyllysine is present on K484.

The protein belongs to the eukaryotic diacylglycerol kinase family. As to quaternary structure, monomer. As to expression, expressed in lymphocytes.

Its subcellular location is the cytoplasm. The protein resides in the cytosol. The enzyme catalyses a 1,2-diacyl-sn-glycerol + ATP = a 1,2-diacyl-sn-glycero-3-phosphate + ADP + H(+). It catalyses the reaction a 1-O-alkyl-sn-glycerol + ATP = a 1-O-alkyl-sn-glycero-3-phosphate + ADP + H(+). The catalysed reaction is 1-O-alkyl-2-acyl-sn-glycerol + ATP = 1-O-alkyl-2-acyl-sn-glycero-3-phosphate + ADP + H(+). It carries out the reaction 1,2-dihexadecanoyl-sn-glycerol + ATP = 1,2-dihexadecanoyl-sn-glycero-3-phosphate + ADP + H(+). The enzyme catalyses 1-hexadecanoyl-2-(9Z-octadecenoyl)-sn-glycerol + ATP = 1-hexadecanoyl-2-(9Z-octadecenoyl)-sn-glycero-3-phosphate + ADP + H(+). It catalyses the reaction 2-(9Z-octadecenoyl)-glycerol + ATP = 2-(9Z-octadecenoyl)-sn-glycero-3-phosphate + ADP + H(+). The catalysed reaction is 1,2-di-(9Z-octadecenoyl)-sn-glycerol + ATP = 1,2-di-(9Z-octadecenoyl)-sn-glycero-3-phosphate + ADP + H(+). It carries out the reaction 1-octadecanoyl-2-(5Z,8Z,11Z,14Z-eicosatetraenoyl)-sn-glycerol + ATP = 1-octadecanoyl-2-(5Z,8Z,11Z,14Z-eicosatetraenoyl)-sn-glycero-3-phosphate + ADP + H(+). The enzyme catalyses 1,2-didecanoyl-sn-glycerol + ATP = 1,2-didecanoyl-sn-glycero-3-phosphate + ADP + H(+). It catalyses the reaction 1-O-hexadecyl-2-acetyl-sn-glycerol + ATP = 1-O-hexadecyl-2-acetyl-sn-glycero-3-phosphate + ADP + H(+). The catalysed reaction is 1-O-hexadecyl-2-(5Z,8Z,11Z,14Z-eicosatetraenoyl)-sn-glycerol + ATP = 1-O-hexadecyl-2-(5Z,8Z,11Z,14Z-eicosatetraenoyl)-sn-glycero-3-phosphate + ADP + H(+). It carries out the reaction 1-O-hexadecyl-2-(9Z-octadecenoyl)-sn-glycerol + ATP = 1-O-hexadecyl-2-(9Z-octadecenoyl)-sn-glycero-3-phosphate + ADP + H(+). The enzyme catalyses 1-O-hexadecyl-sn-glycerol + ATP = 1-O-hexadecyl-sn-glycero-3-phosphate + ADP + H(+). Its pathway is lipid metabolism; glycerolipid metabolism. With respect to regulation, stimulated by calcium and phosphatidylserine. Diacylglycerol kinase that converts diacylglycerol/DAG into phosphatidic acid/phosphatidate/PA and regulates the respective levels of these two bioactive lipids. Thereby, acts as a central switch between the signaling pathways activated by these second messengers with different cellular targets and opposite effects in numerous biological processes. Also plays an important role in the biosynthesis of complex lipids. Can also phosphorylate 1-alkyl-2-acylglycerol in vitro as efficiently as diacylglycerol provided it contains an arachidonoyl group. Also involved in the production of alkyl-lysophosphatidic acid, another bioactive lipid, through the phosphorylation of 1-alkyl-2-acetyl glycerol. The chain is Diacylglycerol kinase alpha (DGKA) from Homo sapiens (Human).